Reading from the N-terminus, the 225-residue chain is MVTHSKFPAAGMSRPLDTSLRLKTFSSKSEYQLVVNAVRKLQESGFYWSAVTGGEANLLLSAEPAGTFLIRDSSDQRHFFTLSVKTQSGTKNLRIQCEGGSFSLQSDPRSTQPVPRFDCVLKLVHHYMPPPGTPSFSLPPTEPSSEVPEQPPAQALPGSTPKRAYYIYSGGEKIPLVLSRPLSSNVATLQHLCRKTVNGHLDSYEKVTQLPGPIREFLDQYDAPL.

A kinase inhibitory region (KIR) region spans residues Leu22 to Leu33. Positions Val34–Gly45 are extended SH2 subdomain (ESS). Residues Phe46–Glu142 form the SH2 domain. The interval Pro131–Thr160 is disordered. The SOCS box domain occupies Val177–Pro224.

Interacts with multiple activated proteins of the tyrosine kinase signaling pathway including IGF1 receptor, insulin receptor and JAK2. Binding to JAK2 is mediated through the KIR and SH2 domains to a phosphorylated tyrosine residue within the JAK2 JH1 domain. Binds specific activated tyrosine residues of the leptin, EPO, IL12, GSCF and gp130 receptors. Interaction with CSNK1E stabilizes SOCS3 protein. Component of the probable ECS(SOCS3) E3 ubiquitin-protein ligase complex which contains CUL5, RNF7/RBX2, elongin BC complex and SOCS3. Interacts with CUL5, RNF7, ELOB and ELOC. Interacts with FGFR3. Interacts with INSR. Interacts with BCL10; this interaction may interfere with BCL10-binding with PELI2. Interacts with NOD2 (via CARD domain); the interaction promotes NOD2 degradation. In terms of processing, phosphorylated on tyrosine residues after stimulation by the cytokines, IL-2, EPO or IGF1. As to expression, low expression in lung, spleen and thymus. Expressed in Th2 but not TH1 cells.

The protein operates within protein modification; protein ubiquitination. In terms of biological role, SOCS family proteins form part of a classical negative feedback system that regulates cytokine signal transduction. SOCS3 is involved in negative regulation of cytokines that signal through the JAK/STAT pathway. Inhibits cytokine signal transduction by binding to tyrosine kinase receptors including IL6ST/gp130, LIF, erythropoietin, insulin, IL12, GCSF and leptin receptors. Binding to JAK2 inhibits its kinase activity and regulates IL6 signaling. Suppresses fetal liver erythropoiesis. Regulates onset and maintenance of allergic responses mediated by T-helper type 2 cells. Probable substrate recognition component of a SCF-like ECS (Elongin BC-CUL2/5-SOCS-box protein) E3 ubiquitin-protein ligase complex which mediates the ubiquitination and subsequent proteasomal degradation of target proteins. The sequence is that of Suppressor of cytokine signaling 3 from Mus musculus (Mouse).